A 613-amino-acid polypeptide reads, in one-letter code: Glucose-6-phosphate isomerase 1, chloroplastic (613 aa).

A compositionally biased stretch (low complexity) spans 1 to 14 (MASLSGLYSSSPSL). Residues 1–21 (MASLSGLYSSSPSLKPAKNHS) are disordered. The transit peptide at 1–48 (MASLSGLYSSSPSLKPAKNHSFKALPAQSRDSFSFPHTSKPTNLPLTL) directs the protein to the chloroplast. Glu392 acts as the Proton donor in catalysis. Active-site residues include His421 and Lys526. Ser595 is subject to Phosphoserine.

Belongs to the GPI family.

The protein localises to the plastid. It is found in the chloroplast stroma. The enzyme catalyses alpha-D-glucose 6-phosphate = beta-D-fructose 6-phosphate. It participates in carbohydrate degradation; glycolysis; D-glyceraldehyde 3-phosphate and glycerone phosphate from D-glucose: step 2/4. Its pathway is carbohydrate biosynthesis; gluconeogenesis. With respect to regulation, inhibited by glycerol-3-P (G3P). Promotes the synthesis of starch in leaves. The protein is Glucose-6-phosphate isomerase 1, chloroplastic (PGI1) of Arabidopsis thaliana (Mouse-ear cress).